A 194-amino-acid chain; its full sequence is Peptidyl-tRNA hydrolase (194 aa).

Residue Tyr-16 coordinates tRNA. His-21 serves as the catalytic Proton acceptor. 3 residues coordinate tRNA: Phe-67, Asn-69, and Asn-115.

This sequence belongs to the PTH family. Monomer.

It localises to the cytoplasm. It carries out the reaction an N-acyl-L-alpha-aminoacyl-tRNA + H2O = an N-acyl-L-amino acid + a tRNA + H(+). Its function is as follows. Hydrolyzes ribosome-free peptidyl-tRNAs (with 1 or more amino acids incorporated), which drop off the ribosome during protein synthesis, or as a result of ribosome stalling. Catalyzes the release of premature peptidyl moieties from peptidyl-tRNA molecules trapped in stalled 50S ribosomal subunits, and thus maintains levels of free tRNAs and 50S ribosomes. This is Peptidyl-tRNA hydrolase from Escherichia coli O81 (strain ED1a).